A 434-amino-acid chain; its full sequence is Nicotinate phosphoribosyltransferase (434 aa).

Histidine 242 bears the Phosphohistidine; by autocatalysis mark.

It belongs to the NAPRTase family. Transiently phosphorylated on a His residue during the reaction cycle. Phosphorylation strongly increases the affinity for substrates and increases the rate of nicotinate D-ribonucleotide production. Dephosphorylation regenerates the low-affinity form of the enzyme, leading to product release.

The catalysed reaction is nicotinate + 5-phospho-alpha-D-ribose 1-diphosphate + ATP + H2O = nicotinate beta-D-ribonucleotide + ADP + phosphate + diphosphate. The protein operates within cofactor biosynthesis; NAD(+) biosynthesis; nicotinate D-ribonucleotide from nicotinate: step 1/1. Its function is as follows. Catalyzes the synthesis of beta-nicotinate D-ribonucleotide from nicotinate and 5-phospho-D-ribose 1-phosphate at the expense of ATP. In Rhizobium leguminosarum bv. trifolii (strain WSM2304), this protein is Nicotinate phosphoribosyltransferase.